Consider the following 246-residue polypeptide: Myelin-oligodendrocyte glycoprotein (246 aa).

The N-terminal stretch at Met1–Ala28 is a signal peptide. Residues Gly29 to Glu144 form the Ig-like V-type domain. Residues Gly29 to Gly153 lie on the Extracellular side of the membrane. An intrachain disulfide couples Cys52 to Cys126. Residue Asn59 is glycosylated (N-linked (GlcNAc...) asparagine). Residues Val154–Phe174 form a helical membrane-spanning segment. Topologically, residues Leu175–Thr209 are cytoplasmic. Residues Leu210–Leu230 traverse the membrane as a helical segment. Residues His231–Phe246 lie on the Extracellular side of the membrane.

The protein belongs to the immunoglobulin superfamily. BTN/MOG family. In terms of assembly, homodimer. As to expression, found exclusively in the CNS, where it is localized on the surface of myelin and oligodendrocyte cytoplasmic membranes.

The protein localises to the membrane. Functionally, mediates homophilic cell-cell adhesion. Minor component of the myelin sheath. May be involved in completion and/or maintenance of the myelin sheath and in cell-cell communication. The polypeptide is Myelin-oligodendrocyte glycoprotein (MOG) (Bos taurus (Bovine)).